The chain runs to 1401 residues: Protein dispatched homolog 2 (1401 aa).

Disordered regions lie at residues M1 to A91 and D113 to K138. Residues V170–G190 traverse the membrane as a helical segment. An N-linked (GlcNAc...) asparagine glycan is attached at N239. The tract at residues S241–R264 is disordered. N-linked (GlcNAc...) asparagine glycosylation is found at N349 and N465. An SSD domain is found at G471 to L643. 11 consecutive transmembrane segments (helical) span residues F484–A504, L510–L530, F542–F562, F589–L609, C617–L637, Y704–S724, P964–W984, L990–L1010, A1019–S1039, A1064–L1084, and L1088–Q1108. Disordered regions lie at residues A1169 to L1192, P1229 to R1337, and S1352 to S1401. Positions S1175 to K1184 are enriched in polar residues. The span at P1259–S1270 shows a compositional bias: low complexity. Residues S1284–P1305 are compositionally biased toward polar residues. Low complexity predominate over residues S1352–S1362. Residue R1366 is modified to Omega-N-methylarginine.

It belongs to the dispatched family.

The protein localises to the membrane. The sequence is that of Protein dispatched homolog 2 from Homo sapiens (Human).